The sequence spans 327 residues: Lipoyl synthase (327 aa).

Positions 66, 71, 77, 92, 96, 99, and 306 each coordinate [4Fe-4S] cluster. The Radical SAM core domain maps to 78–295 (FSKGTATFMI…EKEAYELGFS (218 aa)).

This sequence belongs to the radical SAM superfamily. Lipoyl synthase family. Requires [4Fe-4S] cluster as cofactor.

The protein resides in the cytoplasm. The enzyme catalyses [[Fe-S] cluster scaffold protein carrying a second [4Fe-4S](2+) cluster] + N(6)-octanoyl-L-lysyl-[protein] + 2 oxidized [2Fe-2S]-[ferredoxin] + 2 S-adenosyl-L-methionine + 4 H(+) = [[Fe-S] cluster scaffold protein] + N(6)-[(R)-dihydrolipoyl]-L-lysyl-[protein] + 4 Fe(3+) + 2 hydrogen sulfide + 2 5'-deoxyadenosine + 2 L-methionine + 2 reduced [2Fe-2S]-[ferredoxin]. It functions in the pathway protein modification; protein lipoylation via endogenous pathway; protein N(6)-(lipoyl)lysine from octanoyl-[acyl-carrier-protein]: step 2/2. Its function is as follows. Catalyzes the radical-mediated insertion of two sulfur atoms into the C-6 and C-8 positions of the octanoyl moiety bound to the lipoyl domains of lipoate-dependent enzymes, thereby converting the octanoylated domains into lipoylated derivatives. This Neisseria meningitidis serogroup A / serotype 4A (strain DSM 15465 / Z2491) protein is Lipoyl synthase.